Reading from the N-terminus, the 328-residue chain is Probable E3 ubiquitin-protein ligase RHC1A (328 aa).

S2 is subject to N-acetylserine. An RING-type; atypical zinc finger spans residues 190-231 (CPVCKDEFELGSEAKQMPCNHIYHSDCIVPWLVQHNSCPVCR). Residues 233 to 324 (ELPSASGPSS…QQSYMGYSGW (92 aa)) are disordered. Positions 238–250 (SGPSSSQNRTTPT) are enriched in polar residues. 2 stretches are compositionally biased toward low complexity: residues 251 to 266 (RNYRSSSSSSSSNSRE) and 275 to 290 (FSSFWPFRSSGSSSSS). Residues 291-300 (TQNRGGTRNS) are compositionally biased toward polar residues.

The enzyme catalyses S-ubiquitinyl-[E2 ubiquitin-conjugating enzyme]-L-cysteine + [acceptor protein]-L-lysine = [E2 ubiquitin-conjugating enzyme]-L-cysteine + N(6)-ubiquitinyl-[acceptor protein]-L-lysine.. Its pathway is protein modification; protein ubiquitination. Functionally, probable E3 ubiquitin-protein ligase that may possess E3 ubiquitin ligase activity in vitro. The chain is Probable E3 ubiquitin-protein ligase RHC1A from Arabidopsis thaliana (Mouse-ear cress).